We begin with the raw amino-acid sequence, 339 residues long: MGRHILKHVFAVGGIYCSFLTWGLLQEPLNTRVWPNSGCTFQVPYIVALVQATIAMICGLIYIKWQKPVLSLSKFWTSHTRDMAIISLSQAISAPLAAYSLSYVDFLTYMLAKSCKLLPVLMVHLIVYRTPIPRSKKLVVLLVTVGITIFTLDGHKPSMTENDVSESSSSSSLIGFVLLGSSLFLDGLTNAKQDKLFQKATYKITGAHLMFALNFFLIVWNVIYMVLVDRQQLAKGLKMLHADPEISRYLLAYACCGAIGQCFIFYTLEQYGSLVLVMVTVTRKMFSMILSIIVYGHQVTLWQWVGIVIVFTGVVCESMGKKNKAKEGNIINEEKVKQS.

Transmembrane regions (helical) follow at residues 5–25 (ILKH…WGLL), 43–63 (VPYI…LIYI), 91–111 (AISA…TYML), 138–158 (LVVL…HKPS), 171–191 (SSLI…LTNA), 208–228 (HLMF…MVLV), 246–268 (ISRY…FYTL), 273–295 (SLVL…IIVY), and 301–321 (LWQW…SMGK).

Belongs to the nucleotide-sugar transporter family. SLC35B subfamily.

The protein resides in the endoplasmic reticulum membrane. Its function is as follows. May be involved in specific transport of UDP-Gal from the cytosol to the Golgi lumen. Involved in the maintenance of optimal conditions for the folding of secretory pathway proteins in the endoplasmic reticulum. This is UDP-galactose transporter homolog 1 (HUT1) from Kluyveromyces lactis (strain ATCC 8585 / CBS 2359 / DSM 70799 / NBRC 1267 / NRRL Y-1140 / WM37) (Yeast).